The following is a 263-amino-acid chain: 3-deoxy-manno-octulosonate cytidylyltransferase (263 aa).

It belongs to the KdsB family.

It localises to the cytoplasm. It carries out the reaction 3-deoxy-alpha-D-manno-oct-2-ulosonate + CTP = CMP-3-deoxy-beta-D-manno-octulosonate + diphosphate. The protein operates within nucleotide-sugar biosynthesis; CMP-3-deoxy-D-manno-octulosonate biosynthesis; CMP-3-deoxy-D-manno-octulosonate from 3-deoxy-D-manno-octulosonate and CTP: step 1/1. It participates in bacterial outer membrane biogenesis; lipopolysaccharide biosynthesis. In terms of biological role, activates KDO (a required 8-carbon sugar) for incorporation into bacterial lipopolysaccharide in Gram-negative bacteria. This is 3-deoxy-manno-octulosonate cytidylyltransferase from Burkholderia vietnamiensis (strain G4 / LMG 22486) (Burkholderia cepacia (strain R1808)).